Consider the following 734-residue polypeptide: Ribosomal RNA large subunit methyltransferase K/L (734 aa).

One can recognise a THUMP domain in the interval 49–167; the sequence is HAYRICMWSR…KTEHTYCLDL (119 aa).

It belongs to the methyltransferase superfamily. RlmKL family.

It is found in the cytoplasm. It carries out the reaction guanosine(2445) in 23S rRNA + S-adenosyl-L-methionine = N(2)-methylguanosine(2445) in 23S rRNA + S-adenosyl-L-homocysteine + H(+). The enzyme catalyses guanosine(2069) in 23S rRNA + S-adenosyl-L-methionine = N(2)-methylguanosine(2069) in 23S rRNA + S-adenosyl-L-homocysteine + H(+). In terms of biological role, specifically methylates the guanine in position 2445 (m2G2445) and the guanine in position 2069 (m7G2069) of 23S rRNA. This is Ribosomal RNA large subunit methyltransferase K/L from Acinetobacter baumannii (strain AYE).